A 179-amino-acid chain; its full sequence is Adenine phosphoribosyltransferase (179 aa).

This sequence belongs to the purine/pyrimidine phosphoribosyltransferase family. As to quaternary structure, homodimer.

It is found in the cytoplasm. It catalyses the reaction AMP + diphosphate = 5-phospho-alpha-D-ribose 1-diphosphate + adenine. The protein operates within purine metabolism; AMP biosynthesis via salvage pathway; AMP from adenine: step 1/1. Functionally, catalyzes a salvage reaction resulting in the formation of AMP, that is energically less costly than de novo synthesis. The chain is Adenine phosphoribosyltransferase from Ruegeria pomeroyi (strain ATCC 700808 / DSM 15171 / DSS-3) (Silicibacter pomeroyi).